Reading from the N-terminus, the 371-residue chain is Cytochrome b (371 aa).

4 helical membrane passes run 25–45 (FGSM…FLAV), 69–90 (WMMQ…YIHI), 105–125 (WLSG…GYVL), and 170–190 (FFAL…LHIM). Heme b-binding residues include H75 and H89. 2 residues coordinate heme b: H174 and H188. Residue H193 participates in a ubiquinone binding. Transmembrane regions (helical) follow at residues 218-238 (YKDL…VSFL), 280-300 (LGGA…PFTH), 312-332 (IMQL…WAAT), and 339-358 (FTMI…IMNP).

It belongs to the cytochrome b family. The cytochrome bc1 complex contains 3 respiratory subunits (MT-CYB, CYC1 and UQCRFS1), 2 core proteins (UQCRC1 and UQCRC2) and probably 6 low-molecular weight proteins. Heme b is required as a cofactor.

It is found in the mitochondrion inner membrane. Functionally, component of the ubiquinol-cytochrome c reductase complex (complex III or cytochrome b-c1 complex) that is part of the mitochondrial respiratory chain. The b-c1 complex mediates electron transfer from ubiquinol to cytochrome c. Contributes to the generation of a proton gradient across the mitochondrial membrane that is then used for ATP synthesis. The polypeptide is Cytochrome b (MT-CYB) (Eryx miliaris (Desert sand boa)).